A 496-amino-acid polypeptide reads, in one-letter code: UDP-N-acetylmuramoyl-L-alanyl-D-glutamate--2,6-diaminopimelate ligase (496 aa).

Residue Ser32 participates in UDP-N-acetyl-alpha-D-muramoyl-L-alanyl-D-glutamate binding. Gly116–Thr122 lines the ATP pocket. UDP-N-acetyl-alpha-D-muramoyl-L-alanyl-D-glutamate contacts are provided by residues Thr158–Thr159, Ser185, Gln191, and Arg193. At Lys225 the chain carries N6-carboxylysine. Meso-2,6-diaminopimelate-binding positions include Arg389, Asp413–Arg416, Gly464, and Glu468. The Meso-diaminopimelate recognition motif signature appears at Asp413 to Arg416.

The protein belongs to the MurCDEF family. MurE subfamily. The cofactor is Mg(2+). Post-translationally, carboxylation is probably crucial for Mg(2+) binding and, consequently, for the gamma-phosphate positioning of ATP.

The protein localises to the cytoplasm. The enzyme catalyses UDP-N-acetyl-alpha-D-muramoyl-L-alanyl-D-glutamate + meso-2,6-diaminopimelate + ATP = UDP-N-acetyl-alpha-D-muramoyl-L-alanyl-gamma-D-glutamyl-meso-2,6-diaminopimelate + ADP + phosphate + H(+). It participates in cell wall biogenesis; peptidoglycan biosynthesis. Its function is as follows. Catalyzes the addition of meso-diaminopimelic acid to the nucleotide precursor UDP-N-acetylmuramoyl-L-alanyl-D-glutamate (UMAG) in the biosynthesis of bacterial cell-wall peptidoglycan. This Trichormus variabilis (strain ATCC 29413 / PCC 7937) (Anabaena variabilis) protein is UDP-N-acetylmuramoyl-L-alanyl-D-glutamate--2,6-diaminopimelate ligase.